Reading from the N-terminus, the 133-residue chain is Type III secretion protein HrcQb (133 aa).

Over residues Met1–Val21 the composition is skewed to acidic residues. The segment at Met1–Met60 is disordered. Basic and acidic residues predominate over residues Glu49–Pro59.

It belongs to the FliN/MopA/SpaO family. Homotetramer. The four monomers assemble into two tightly bound homodimers. Interacts with HrcQa.

It localises to the cytoplasm. Its function is as follows. Component of the type III secretion system, which is required for effector protein delivery, parasitism, and pathogenicity. Probably participates in the formation of a C-ring-like assembly along with HrcQa. The sequence is that of Type III secretion protein HrcQb (hrcQb) from Pseudomonas syringae pv. syringae.